The chain runs to 484 residues: BPI fold-containing family B member 1 (484 aa).

Positions 1–21 (MAGPWTFTLLCGLLAATLIQA) are cleaved as a signal peptide. Asn48 carries an N-linked (GlcNAc...) asparagine glycan. Residues Cys158 and Cys201 are joined by a disulfide bond. Residues Asn264 and Asn401 are each glycosylated (N-linked (GlcNAc...) asparagine).

It belongs to the BPI/LBP/Plunc superfamily. Plunc family. As to expression, detected in duodenum mucosal crypts of cholera patients, near Paneth cells (at protein level). Detected in trachea, nasal septal epithelium and lung.

The protein resides in the secreted. Its function is as follows. May play a role in innate immunity in mouth, nose and lungs. Binds bacterial lipopolysaccharide (LPS) and modulates the cellular responses to LPS. This chain is BPI fold-containing family B member 1 (BPIFB1), found in Homo sapiens (Human).